We begin with the raw amino-acid sequence, 894 residues long: Protein translocase subunit SecA (894 aa).

ATP contacts are provided by residues Gln-87, 105–109 (GEGKT), and Asp-512. The tract at residues 836–870 (EVEQAERERQAHAEQESSHYHAEGEGQDFSDLHIG) is disordered. The Zn(2+) site is built by Cys-875, Cys-877, Cys-886, and His-887.

The protein belongs to the SecA family. In terms of assembly, monomer and homodimer. Part of the essential Sec protein translocation apparatus which comprises SecA, SecYEG and auxiliary proteins SecDF-YajC and YidC. It depends on Zn(2+) as a cofactor.

The protein resides in the cell inner membrane. It localises to the cytoplasm. The enzyme catalyses ATP + H2O + cellular proteinSide 1 = ADP + phosphate + cellular proteinSide 2.. Its function is as follows. Part of the Sec protein translocase complex. Interacts with the SecYEG preprotein conducting channel. Has a central role in coupling the hydrolysis of ATP to the transfer of proteins into and across the cell membrane, serving both as a receptor for the preprotein-SecB complex and as an ATP-driven molecular motor driving the stepwise translocation of polypeptide chains across the membrane. This Glaesserella parasuis serovar 5 (strain SH0165) (Haemophilus parasuis) protein is Protein translocase subunit SecA.